Here is a 373-residue protein sequence, read N- to C-terminus: Chaperone protein DnaJ (373 aa).

Residues 5-70 enclose the J domain; sequence DYYEVLGVNR…QKRAAYDQYG (66 aa). The segment at 133-211 adopts a CR-type zinc-finger fold; that stretch reads GTETKIRIPV…CHGGGRVKQH (79 aa). Zn(2+) contacts are provided by Cys-146, Cys-149, Cys-163, Cys-166, Cys-185, Cys-188, Cys-199, and Cys-202. CXXCXGXG motif repeat units follow at residues 146–153, 163–170, 185–192, and 199–206; these read CETCHGSG, CSTCGGHG, CPKCHGSG, and CPTCHGGG. Residues 346 to 373 form a disordered region; the sequence is LEDINQQDSGKHSPREKSWMTKVKDFFQ. The segment covering 354 to 373 has biased composition (basic and acidic residues); the sequence is SGKHSPREKSWMTKVKDFFQ.

Belongs to the DnaJ family. As to quaternary structure, homodimer. Zn(2+) is required as a cofactor.

The protein resides in the cytoplasm. In terms of biological role, participates actively in the response to hyperosmotic and heat shock by preventing the aggregation of stress-denatured proteins and by disaggregating proteins, also in an autonomous, DnaK-independent fashion. Unfolded proteins bind initially to DnaJ; upon interaction with the DnaJ-bound protein, DnaK hydrolyzes its bound ATP, resulting in the formation of a stable complex. GrpE releases ADP from DnaK; ATP binding to DnaK triggers the release of the substrate protein, thus completing the reaction cycle. Several rounds of ATP-dependent interactions between DnaJ, DnaK and GrpE are required for fully efficient folding. Also involved, together with DnaK and GrpE, in the DNA replication of plasmids through activation of initiation proteins. The polypeptide is Chaperone protein DnaJ (Methylobacillus flagellatus (strain ATCC 51484 / DSM 6875 / VKM B-1610 / KT)).